Reading from the N-terminus, the 189-residue chain is Probable nicotinate-nucleotide adenylyltransferase (189 aa).

This sequence belongs to the NadD family.

The enzyme catalyses nicotinate beta-D-ribonucleotide + ATP + H(+) = deamido-NAD(+) + diphosphate. Its pathway is cofactor biosynthesis; NAD(+) biosynthesis; deamido-NAD(+) from nicotinate D-ribonucleotide: step 1/1. In terms of biological role, catalyzes the reversible adenylation of nicotinate mononucleotide (NaMN) to nicotinic acid adenine dinucleotide (NaAD). The polypeptide is Probable nicotinate-nucleotide adenylyltransferase (Bacillus cereus (strain Q1)).